Reading from the N-terminus, the 1378-residue chain is MALSFTEKKRIRKNFGRIPEAIEMPNLIEVQRESYEAFLQMNTPREQRTDDGLGGVFKSVFPITDFSERATLEYVSYEFEQPKFDVEECVQRDLTFQAPLKVRLQLVVFDVDEDTGARSVKEVKEQECYLGDIPLMTDKGTFVINGTERVIVSQMHRSPGVFFDHDKGKTHASGKLLFAARIIPYRGSWLDFEFDAKDVLNIRIDRKRKLPATTMLYALGYDTEQILDQFYTRSIYRLDKKGWITSFRADAWKGVKPEFELIDAKTGKSVAEAGKKITALKAKRMAEAGTDEILVTSEALIGKFLARDVVNLETGEIFGEAGDALEEPIIAEMREYGIDSIEVLDIDAGGRGPWLRNTLKADKNETRFEALSDIYRVMRPGEPPTQEAADALFGQLFFDPERYDLSAVGRVKMNMRLSVAVREYESAADNMRTLRNEDIIGVMKVILDLKDGKGEVDDIDNLGNRRVRSVGELMENNYRIGLVRMERAIKERMGAVDIDTVMPHDLINAKPVVAAVREFFGSSQLSQFMDQTNPLSEITHKRRLSALGPGGLTRERAGFEVRDVHPTHYGRICPIETPEGPNIGLINSLATHARVNKYGFIESPYRRVKDAKLTEEVVYLSAMEESIYSIAQANATVNDKGELVNEFVNARVAGEATMIAKEEVQYMDVSPKQVVSVAASLIPFLENDDANRALMGSNMQRQAVPLVKSEAPFVGTGMEAVVARDSRAAIVARRAGVVEQVDAMRIVVRATEDLEGSKSGVDIYRLAKFRRSNQNSCINQRPIAKVGDVVSKNDIIADGPSTDLGELALGRNVLVAFMPWNGYNFEDSILISERIVRDDVFTSIHIEEFEVAARDTKLGPEEITRDIPNVGEEALRNLDEAGIVAVGAEVKAGDILVGKVTPKGESPMTPEEKLLRAIFGEKASDVRDTSLRVPPGDAGTVVDVRIFNRHGIDKDQRALQIEREQIEKLQEDKEDEQSILERNTYSRLRDILIGKDAATGPKGFKAGKIAEAALEELTQRQWWEIELKSEKAQAELQALREQFDASIRELEARFNDKVEKVQRGDDLPPGVMKVVKVFLAVKRKLQPGDKMAGRHGNKGVISKINPLEDMPFLEDGTPVDIVLNPLGVPSRMNVGQILETHTGWACRGLGNIIDKALEEFHQKHDVAALKASLTHAYGDKQEMPETDAEIIELAGNLRGGVPIATPVFDGAREEDINDLLTRAGLDTSGQVRLFDGRTGVAFTRPVTVGYKYLLKLHHLVDEKIHARSTGPYSLVTQQPLGGKAQFGGQRFGEMEVWALEAYGAAYTLQEMLTVKSDDTAGRAKVYESIVRGDDSFEAGIPESFNVLIKEMRSLGLNVELLEDRGGAIEEEEAPVAAE.

Belongs to the RNA polymerase beta chain family. In terms of assembly, the RNAP catalytic core consists of 2 alpha, 1 beta, 1 beta' and 1 omega subunit. When a sigma factor is associated with the core the holoenzyme is formed, which can initiate transcription.

The catalysed reaction is RNA(n) + a ribonucleoside 5'-triphosphate = RNA(n+1) + diphosphate. In terms of biological role, DNA-dependent RNA polymerase catalyzes the transcription of DNA into RNA using the four ribonucleoside triphosphates as substrates. The chain is DNA-directed RNA polymerase subunit beta from Hyphomonas neptunium (strain ATCC 15444).